The primary structure comprises 143 residues: Large ribosomal subunit protein uL13 (143 aa).

This sequence belongs to the universal ribosomal protein uL13 family. Part of the 50S ribosomal subunit.

Functionally, this protein is one of the early assembly proteins of the 50S ribosomal subunit, although it is not seen to bind rRNA by itself. It is important during the early stages of 50S assembly. This Neisseria meningitidis serogroup C (strain 053442) protein is Large ribosomal subunit protein uL13.